The chain runs to 172 residues: Ribosome maturation factor RimP (172 aa).

It belongs to the RimP family.

It is found in the cytoplasm. Its function is as follows. Required for maturation of 30S ribosomal subunits. This chain is Ribosome maturation factor RimP, found in Chlorobium phaeovibrioides (strain DSM 265 / 1930) (Prosthecochloris vibrioformis (strain DSM 265)).